The primary structure comprises 162 residues: Shikimate kinase (162 aa).

10–15 is an ATP binding site; it reads GAGKST. Mg(2+) is bound at residue S14. Residues D28, R52, and G73 each contribute to the substrate site. Residue R113 coordinates ATP. R129 serves as a coordination point for substrate.

It belongs to the shikimate kinase family. In terms of assembly, monomer. Mg(2+) serves as cofactor.

It localises to the cytoplasm. It carries out the reaction shikimate + ATP = 3-phosphoshikimate + ADP + H(+). It functions in the pathway metabolic intermediate biosynthesis; chorismate biosynthesis; chorismate from D-erythrose 4-phosphate and phosphoenolpyruvate: step 5/7. Functionally, catalyzes the specific phosphorylation of the 3-hydroxyl group of shikimic acid using ATP as a cosubstrate. The chain is Shikimate kinase from Lactococcus lactis subsp. cremoris (strain MG1363).